The primary structure comprises 305 residues: Heterogeneous nuclear ribonucleoprotein A0 (305 aa).

Methionine 1 is subject to N-acetylmethionine. The region spanning 7 to 86 (CKLFIGGLNV…VELKRAVSRE (80 aa)) is the RRM 1 domain. Serine 68 carries the post-translational modification Phosphoserine. A Glycyl lysine isopeptide (Lys-Gly) (interchain with G-Cter in SUMO2) cross-link involves residue lysine 80. Serine 84 is modified (phosphoserine; by MAPKAPK2). Glycyl lysine isopeptide (Lys-Gly) (interchain with G-Cter in SUMO2) cross-links involve residues lysine 96, lysine 98, lysine 99, and lysine 106. The RRM 2 domain occupies 98 to 175 (KKLFVGGLKG…HRVEVKKAVP (78 aa)). Lysine 133 carries the N6-acetyllysine modification. Arginine 139 bears the Omega-N-methylarginine mark. Residues lysine 154, lysine 159, lysine 172, and lysine 176 each participate in a glycyl lysine isopeptide (Lys-Gly) (interchain with G-Cter in SUMO2) cross-link. Disordered stretches follow at residues 178–211 (DIHA…RDQN) and 265–305 (QSSY…GGSF). Gly residues-rich tracts occupy residues 181 to 211 (AGGG…RDQN) and 272 to 284 (KSGG…GSWG). Arginine 286 carries the post-translational modification Omega-N-methylarginine. Positions 292–305 (YRGGYGGGYGGGSF) are enriched in gly residues. The residue at position 293 (arginine 293) is an Asymmetric dimethylarginine; alternate. Residue arginine 293 is modified to Dimethylated arginine; alternate. Arginine 293 bears the Omega-N-methylarginine; alternate mark.

Phosphorylated at Ser-84 by MAPKAPK2 in response to LPS treatment, promoting stabilization of GADD45A mRNA. In terms of processing, arg-293 is dimethylated, probably to asymmetric dimethylarginine.

Its subcellular location is the nucleus. MRNA-binding component of ribonucleosomes. Specifically binds AU-rich element (ARE)-containing mRNAs. Involved in post-transcriptional regulation of cytokines mRNAs. In Mus musculus (Mouse), this protein is Heterogeneous nuclear ribonucleoprotein A0 (Hnrnpa0).